A 183-amino-acid chain; its full sequence is Nucleoside triphosphate pyrophosphatase (183 aa).

D71 serves as the catalytic Proton acceptor.

This sequence belongs to the Maf family. A divalent metal cation is required as a cofactor.

The protein localises to the cytoplasm. The catalysed reaction is a ribonucleoside 5'-triphosphate + H2O = a ribonucleoside 5'-phosphate + diphosphate + H(+). The enzyme catalyses a 2'-deoxyribonucleoside 5'-triphosphate + H2O = a 2'-deoxyribonucleoside 5'-phosphate + diphosphate + H(+). Its function is as follows. Nucleoside triphosphate pyrophosphatase. May have a dual role in cell division arrest and in preventing the incorporation of modified nucleotides into cellular nucleic acids. The protein is Nucleoside triphosphate pyrophosphatase of Campylobacter jejuni subsp. jejuni serotype O:2 (strain ATCC 700819 / NCTC 11168).